The following is a 369-amino-acid chain: 3-dehydroquinate synthase (369 aa).

Residues 80 to 85 (DGEQYK), 114 to 118 (GVIGD), 138 to 139 (TT), K151, K160, and 178 to 181 (TLKT) each bind NAD(+). Zn(2+)-binding residues include E193, H256, and H273.

It belongs to the sugar phosphate cyclases superfamily. Dehydroquinate synthase family. The cofactor is Co(2+). Zn(2+) serves as cofactor. NAD(+) is required as a cofactor.

The protein localises to the cytoplasm. It catalyses the reaction 7-phospho-2-dehydro-3-deoxy-D-arabino-heptonate = 3-dehydroquinate + phosphate. It functions in the pathway metabolic intermediate biosynthesis; chorismate biosynthesis; chorismate from D-erythrose 4-phosphate and phosphoenolpyruvate: step 2/7. Its function is as follows. Catalyzes the conversion of 3-deoxy-D-arabino-heptulosonate 7-phosphate (DAHP) to dehydroquinate (DHQ). This chain is 3-dehydroquinate synthase, found in Psychrobacter cryohalolentis (strain ATCC BAA-1226 / DSM 17306 / VKM B-2378 / K5).